A 103-amino-acid polypeptide reads, in one-letter code: Large ribosomal subunit protein bL21 (103 aa).

It belongs to the bacterial ribosomal protein bL21 family. Part of the 50S ribosomal subunit. Contacts protein L20.

Functionally, this protein binds to 23S rRNA in the presence of protein L20. This is Large ribosomal subunit protein bL21 from Rhodococcus erythropolis (strain PR4 / NBRC 100887).